We begin with the raw amino-acid sequence, 600 residues long: Elongation factor 4 (600 aa).

The 183-residue stretch at 5–187 (SHIRNFSIVA…ALVNRLPCPE (183 aa)) folds into the tr-type G domain. GTP contacts are provided by residues 17 to 22 (DHGKST) and 134 to 137 (NKID).

Belongs to the TRAFAC class translation factor GTPase superfamily. Classic translation factor GTPase family. LepA subfamily.

The protein localises to the cell inner membrane. It catalyses the reaction GTP + H2O = GDP + phosphate + H(+). Required for accurate and efficient protein synthesis under certain stress conditions. May act as a fidelity factor of the translation reaction, by catalyzing a one-codon backward translocation of tRNAs on improperly translocated ribosomes. Back-translocation proceeds from a post-translocation (POST) complex to a pre-translocation (PRE) complex, thus giving elongation factor G a second chance to translocate the tRNAs correctly. Binds to ribosomes in a GTP-dependent manner. The protein is Elongation factor 4 of Paramagnetospirillum magneticum (strain ATCC 700264 / AMB-1) (Magnetospirillum magneticum).